Reading from the N-terminus, the 47-residue chain is Potassium channel toxin gamma-KTx 5.1 (47 aa).

4 cysteine pairs are disulfide-bonded: Cys5–Cys23, Cys11–Cys34, Cys20–Cys39, and Cys24–Cys41.

The protein belongs to the ergtoxin family. Gamma-KTx 5 subfamily. As to expression, expressed by the venom gland.

The protein resides in the secreted. Functionally, reversibly blocks Kv11/ERG potassium channels. This Centruroides sculpturatus (Arizona bark scorpion) protein is Potassium channel toxin gamma-KTx 5.1.